A 419-amino-acid chain; its full sequence is 26S proteasome regulatory subunit 8 homolog B (419 aa).

202–209 provides a ligand contact to ATP; sequence GPPGTGKT. Lys406 is covalently cross-linked (Glycyl lysine isopeptide (Lys-Gly) (interchain with G-Cter in ubiquitin)).

The protein belongs to the AAA ATPase family. Component of the 19S regulatory particle (RP/PA700) base subcomplex of the 26S proteasome. The 26S proteasome is composed of a core protease (CP), known as the 20S proteasome, capped at one or both ends by the 19S regulatory particle (RP/PA700). The RP/PA700 complex is composed of at least 17 different subunits in two subcomplexes, the base and the lid, which form the portions proximal and distal to the 20S proteolytic core, respectively.

The protein localises to the cytoplasm. It localises to the nucleus. Functionally, the 26S proteasome is involved in the ATP-dependent degradation of ubiquitinated proteins. The regulatory (or ATPase) complex confers ATP dependency and substrate specificity to the 26S complex. The protein is 26S proteasome regulatory subunit 8 homolog B (RPT6B) of Arabidopsis thaliana (Mouse-ear cress).